Here is a 239-residue protein sequence, read N- to C-terminus: Fibroblast growth factor 3 (239 aa).

The first 17 residues, 1–17 (MGLIWLLLLSLLEPGWP), serve as a signal peptide directing secretion. N-linked (GlcNAc...) asparagine glycosylation is present at asparagine 65. Residues 193–239 (QLQSGLPRPPGKGVQPRRRRQKQSPDNLEPSHVQASRLGSQLEASAH) form a disordered region. The segment covering 225–239 (VQASRLGSQLEASAH) has biased composition (polar residues).

Belongs to the heparin-binding growth factors family. As to quaternary structure, interacts with FGFR1 and FGFR2. Affinity between fibroblast growth factors (FGFs) and their receptors is increased by heparan sulfate glycosaminoglycans that function as coreceptors.

It is found in the secreted. In terms of biological role, plays an important role in the regulation of embryonic development, cell proliferation, and cell differentiation. Required for normal ear development. This chain is Fibroblast growth factor 3 (FGF3), found in Homo sapiens (Human).